The following is a 66-amino-acid chain: Large ribosomal subunit protein bL33c (66 aa).

It belongs to the bacterial ribosomal protein bL33 family.

Its subcellular location is the plastid. It localises to the chloroplast. This Welwitschia mirabilis (Tree tumbo) protein is Large ribosomal subunit protein bL33c.